We begin with the raw amino-acid sequence, 311 residues long: tRNA pseudouridine synthase B (311 aa).

Catalysis depends on aspartate 49, which acts as the Nucleophile.

The protein belongs to the pseudouridine synthase TruB family. Type 1 subfamily.

It carries out the reaction uridine(55) in tRNA = pseudouridine(55) in tRNA. Responsible for synthesis of pseudouridine from uracil-55 in the psi GC loop of transfer RNAs. The chain is tRNA pseudouridine synthase B from Rhizobium meliloti (strain 1021) (Ensifer meliloti).